Consider the following 334-residue polypeptide: MAFNLRNRNFLKLLDFTPREIQYMIDLAIDLKKAKYGGYERKHLTGKNIALIFEKTSTRTRCAFEVAAFDQGAQVSYLGPSGSQIGHKESMKDTARVLGRMYDGIEYRGYGQEIVEELGAYAGVPVWNGLTNEFHPTQILADFMTMLEHGKGKRLDQIKFAYLGDARNNMGNSLMVGAAKMGMDIRLVAPKAFWPEEDLVAKCRLIAEETGACITLTEDVKEGVLGTDFLYTDVWVSMGEAKEAWDQRVKLMTPYQINMDVINATKNPDVKFMHCLPAFHNDETTMGKEVADKYGMKGLEVTEDVFESEHSIVFDEAENRMHTIKAVMVATLGD.

Residues 57-60, Gln84, Arg108, and 135-138 contribute to the carbamoyl phosphate site; these read STRT and HPTQ. L-ornithine is bound by residues Asn169, Asp233, and 237–238; that span reads SM. Carbamoyl phosphate-binding positions include 275-276 and Arg320; that span reads CL.

This sequence belongs to the aspartate/ornithine carbamoyltransferase superfamily. OTCase family.

Its subcellular location is the cytoplasm. The catalysed reaction is carbamoyl phosphate + L-ornithine = L-citrulline + phosphate + H(+). Its pathway is amino-acid biosynthesis; L-arginine biosynthesis; L-arginine from L-ornithine and carbamoyl phosphate: step 1/3. Its function is as follows. Reversibly catalyzes the transfer of the carbamoyl group from carbamoyl phosphate (CP) to the N(epsilon) atom of ornithine (ORN) to produce L-citrulline. In Aeromonas salmonicida (strain A449), this protein is Ornithine carbamoyltransferase.